Consider the following 329-residue polypeptide: MYG1 protein (329 aa).

Belongs to the MYG1 family.

This is MYG1 protein from Dictyostelium discoideum (Social amoeba).